We begin with the raw amino-acid sequence, 302 residues long: Glutaminase (302 aa).

Residues S61, N111, E155, N162, Y186, Y238, and V256 each contribute to the substrate site.

Belongs to the glutaminase family. Homotetramer.

It catalyses the reaction L-glutamine + H2O = L-glutamate + NH4(+). This is Glutaminase from Pseudomonas paraeruginosa (strain DSM 24068 / PA7) (Pseudomonas aeruginosa (strain PA7)).